The sequence spans 59 residues: Large ribosomal subunit protein bL33 (59 aa).

This sequence belongs to the bacterial ribosomal protein bL33 family.

This is Large ribosomal subunit protein bL33 from Prosthecochloris aestuarii (strain DSM 271 / SK 413).